Here is a 947-residue protein sequence, read N- to C-terminus: MATRVRTASIWVPPLQERNSSWDRIRKLQGQESILGQGTPGLQPLPGTPRQKQKSRRIEKVLEWLFISQEQPKITKSWGPLSFMDVFVDFTWEEWQLLDPAQKCLYRSVMLENYSNLVSLGYQHTKPDIIFKLEQGEELCMVQAQVPNQTCPNTVWKIDDLMDWHQENKDKLGSTAKSFECTTFGKLCLLSTKYLSRQKPHKCGTHGKSLKYIDFTSDYARNNPNGFQVHGKSFFHSKHEQTVIGIKYCESIESGKTVNKKSQLMCQQMYMGEKPFGCSCCEKAFSSKSYLLVHQQTHAEEKPYGCNECGKDFSSKSYLIVHQRIHTGEKLHECSECRKTFSFHSQLVIHQRIHTGENPYECCECGKVFSRKDQLVSHQKTHSGQKPYVCNECGKAFGLKSQLIIHERIHTGEKPYECNECQKAFNTKSNLMVHQRTHTGEKPYVCSDCGKAFTFKSQLIVHQGIHTGVKPYGCIQCGKGFSLKSQLIVHQRSHTGMKPYVCNECGKAFRSKSYLIIHTRTHTGEKLHECNNCGKAFSFKSQLIIHQRIHTGENPYECHECGKAFSRKYQLISHQRTHAGEKPYECTDCGKAFGLKSQLIIHQRTHTGEKPFECSECQKAFNTKSNLIVHQRTHTGEKPYSCNECGKAFTFKSQLIVHKGVHTGVKPYGCSQCAKTFSLKSQLIVHQRSHTGVKPYGCSECGKAFRSKSYLIIHMRTHTGEKPHECRECGKSFSFNSQLIVHQRIHTGENPYECSECGKAFNRKDQLISHQRTHAGEKPYGCSECGKAFSSKSYLIIHMRTHSGEKPYECNECGKAFIWKSLLIVHERTHAGVNPYKCSQCEKSFSGKLRLLVHQRMHTREKPYECSECGKAFIRNSQLIVHQRTHSGEKPYGCNECGKTFSQKSILSAHQRTHTGEKPCKCTECGKAFCWKSQLIMHQRTHVDDKH.

Positions 81–152 (LSFMDVFVDF…QAQVPNQTCP (72 aa)) constitute a KRAB domain. Phosphoserine; by TBK1 is present on Ser178. C2H2-type zinc fingers lie at residues 276–298 (FGCS…QQTH), 304–326 (YGCN…QRIH), 332–354 (HECS…QRIH), 360–382 (YECC…QKTH), 388–410 (YVCN…ERIH), 416–438 (YECN…QRTH), 444–466 (YVCS…QGIH), 472–494 (YGCI…QRSH), 500–522 (YVCN…TRTH), 528–550 (HECN…QRIH), 556–578 (YECH…QRTH), 584–606 (YECT…QRTH), 612–634 (FECS…QRTH), 640–662 (YSCN…KGVH), 668–690 (YGCS…QRSH), 696–718 (YGCS…MRTH), 724–746 (HECR…QRIH), 752–774 (YECS…QRTH), 780–802 (YGCS…MRTH), 808–830 (YECN…ERTH), 836–858 (YKCS…QRMH), 864–886 (YECS…QRTH), 892–914 (YGCN…QRTH), and 920–942 (CKCT…QRTH).

The protein belongs to the krueppel C2H2-type zinc-finger protein family. As to quaternary structure, interacts (via the KRAB domain) with TRIM28 (via the RBCC domain); the interaction increases ZNF268 nuclear localization activity. Isoform 2 interacts with CHUK and IKBKB; the interaction is further increased in a TNF-alpha-dependent manner. Interacts with TOLLIP; this interaction is impaired by ZNF268 phosphorylation at Ser-178. Forms a ternary complex with TBK1 and SETD4; the interaction between SETD4 and TBK1 is ZNF268-dependent and leads to TBK1 monomethylation. In terms of processing, phosphorylation at Ser-178 stabilizes the protein by interfering with its binding to TOLLIP, hence impairing its degradation by Tollip-mediated selective autophagy system. Overexpressed in ovarian cancer tissues compared to normal ovarian tissues. Isoform 1 and isoform 2 are expressed in squamous epithelium tissues. Isoform 2 is overexpressed in squamous cervical cancer (at protein level). Expressed in blood cells. Isoform 1 is expressed in pancreas, lung, skeletal muscle, heart, placenta, liver, kidney and brain. Isoform 2 expressed in chronic lymphocytic leukemia (CLL) and several tumor cell lines. Isoform 3 is expressed in several tumor cells. Isoform 5 is expressed in fetal liver and several tumor cells. Isoform 6 is weakly expressed in brain, lung amd small intestin and in several tumor cells. Isoform 7 is expressed in fetal liver and several tumor cells.

The protein localises to the nucleus. It is found in the cytoplasm. Acts as a transcriptional repressor. Inhibits erythroid differentiation and tumor cell proliferation. Plays a role during ovarian cancer development and progression. Functionally, contributes to cervical carcinogenesis in part through the TNF-alpha-induced NF-kappa-B signaling pathway by interacting with the I-kappa-B-kinase (IKK) core complex. In terms of biological role, involved in the regulation of antiviral interferon signaling. During viral infection, recruits SETD4 to TBK1, leading to TBK1 monomethylation, which is critical for the assembly of TBK1 complex and IRF3 signaling. This is Zinc finger protein 268 (ZNF268) from Homo sapiens (Human).